The chain runs to 619 residues: Zinc finger protein 668 (619 aa).

N-acetylmethionine is present on M1. Phosphoserine is present on S10. The C2H2-type 1 zinc-finger motif lies at Y22–H44. A disordered region spans residues A34–A79. Over residues A54–G71 the composition is skewed to basic and acidic residues. Residues K57, K59, K65, and K80 each participate in a glycyl lysine isopeptide (Lys-Gly) (interchain with G-Cter in SUMO2) cross-link. 11 consecutive C2H2-type zinc fingers follow at residues Y84–H106, F112–H134, F140–H162, Y168–H190, Y196–H218, F224–H246, Y252–H274, F280–H302, Y308–H330, F336–H358, and F364–H386. A Glycyl lysine isopeptide (Lys-Gly) (interchain with G-Cter in SUMO2) cross-link involves residue K154. Position 387 is a phosphoserine (S387). The C2H2-type 13 zinc-finger motif lies at F392 to H414. Residues R492–P513 are disordered. A Glycyl lysine isopeptide (Lys-Gly) (interchain with G-Cter in SUMO2) cross-link involves residue K512. 3 consecutive C2H2-type zinc fingers follow at residues F516–H538, F544–H566, and Y572–H594.

The protein belongs to the krueppel C2H2-type zinc-finger protein family.

It is found in the nucleus. Its function is as follows. May be involved in transcriptional regulation. May play a role in DNA repair process. This is Zinc finger protein 668 (ZNF668) from Homo sapiens (Human).